Reading from the N-terminus, the 976-residue chain is Vacuolar membrane protease (976 aa).

Over 1–15 (MKLKSVFRSVLKYRK) the chain is Cytoplasmic. A helical membrane pass occupies residues 16–36 (TNLSLLLLITYSIITLLYIFD). At 37–359 (HERYKLNLPK…KFFVISAKTL (323 aa)) the chain is on the vacuolar side. N-linked (GlcNAc...) asparagine glycans are attached at residues Asn96 and Asn121. 2 residues coordinate Zn(2+): His156 and Asp168. Asn189 is a glycosylation site (N-linked (GlcNAc...) asparagine). Glu200 serves as the catalytic Proton acceptor. Position 201 (Glu201) interacts with Zn(2+). Asn212 and Asn217 each carry an N-linked (GlcNAc...) asparagine glycan. Positions 226 and 300 each coordinate Zn(2+). Residues 360 to 380 (FYWNCIFLLVSPVVAIGLYLI) form a helical membrane-spanning segment. The Cytoplasmic portion of the chain corresponds to 381–392 (SRDRMTWKSHSW). Residues 393–412 (LSWTRFPLSLAAGIIVQKLF) traverse the membrane as a helical segment. At 413–428 (SNDIIRSNPLTFSRNY) the chain is on the vacuolar side. Residues 429-449 (FWPISAFFTQVIFTSYVLINC) form a helical membrane-spanning segment. Topologically, residues 450 to 461 (SNFFFPCADMKS) are cytoplasmic. Residues 462–482 (LSIIELFIILWTILLFTSKLL) form a helical membrane-spanning segment. Residues 483 to 496 (YSSDYRYTGLYPLS) are Vacuolar-facing. Residues 497 to 517 (IFFLLSTIAAILRLLALALGM) form a helical membrane-spanning segment. Residues 518 to 627 (RTRKRLGREC…NSLKLEYTDY (110 aa)) lie on the Cytoplasmic side of the membrane. Positions 528 to 610 (RDHHSNYSSH…PLLKGSNSME (83 aa)) are disordered. Residues 549 to 558 (NLEQPQDQFT) show a composition bias toward polar residues. Over residues 559–570 (SSQDDQASIQDD) the composition is skewed to low complexity. The span at 582–601 (NVDEDHGMDSSSQQHDERVP) shows a compositional bias: basic and acidic residues. The helical transmembrane segment at 628–648 (AWIIQFLLIVPIPSFILFNSV) threads the bilayer. Residues 649 to 668 (DVIMDALNHTVQEGSKATFD) lie on the Vacuolar side of the membrane. N-linked (GlcNAc...) asparagine glycosylation is present at Asn656. Residues 669–689 (VLRFGMVGSILIALPILPFFY) form a helical membrane-spanning segment. At 690–692 (KVN) the chain is on the cytoplasmic side. The chain crosses the membrane as a helical span at residues 693–713 (YITISLTALLFLISASKTLLV). Over 714–976 (HPFTNSNPLK…LVIVKDAIIL (263 aa)) the chain is Vacuolar. N-linked (GlcNAc...) asparagine glycosylation is found at Asn768, Asn796, Asn811, Asn866, and Asn937.

This sequence belongs to the peptidase M28 family. Zn(2+) is required as a cofactor.

It is found in the vacuole membrane. Functionally, may be involved in vacuolar sorting and osmoregulation. The polypeptide is Vacuolar membrane protease (Saccharomyces cerevisiae (strain JAY291) (Baker's yeast)).